Consider the following 324-residue polypeptide: MPPAVSSETSTIVPQQVIVHPLVLLSAVDSYNRSAKGTKRRVVGILLGQNNGDVVNVANSYAIPFEEDEKNASVWFLDHNFMESMNEMFKKINANEKLVGWYHTGPQLRPSDLEINNLLKKYIPNPVLVIIDVKPKSVGLPTNAYFAIDEIEDDGSKSSRTFVHLPSSIEAEEAEEIGVEHLLRDTRDASVGTLATRVTQQAQSLQGLGQRLTEIADYLRKVVDGQLPINHAILAELQSVFNLLPNIFSGPVVSEQALESEAQRAFNVNSNDQLMSIYISSIVRAVIALHDLLDSLAASKAMEQQDIKPTVQNGEVSANAEQKA.

In terms of domain architecture, MPN spans 17–151; it reads VIVHPLVLLS…TNAYFAIDEI (135 aa).

This sequence belongs to the peptidase M67A family.

Functionally, acts as a regulatory subunit of the 26S proteasome which is involved in the ATP-dependent degradation of ubiquitinated proteins. The protein is 26S proteasome regulatory subunit rpn8 (rpn8) of Schizosaccharomyces pombe (strain 972 / ATCC 24843) (Fission yeast).